A 1105-amino-acid polypeptide reads, in one-letter code: Carbamoyl phosphate synthase large chain (1105 aa).

The segment at 1 to 402 (MPKRDDIEKV…ALGKAVRSLE (402 aa)) is carboxyphosphate synthetic domain. 12 residues coordinate ATP: R129, R169, G175, G176, K208, V210, E215, G241, I242, H243, Q285, and E299. The ATP-grasp 1 domain maps to 133–328 (KTAMKNCGLE…IAKISALLAV (196 aa)). Q285, E299, and N301 together coordinate Mg(2+). Mn(2+)-binding residues include Q285, E299, and N301. The oligomerization domain stretch occupies residues 403–542 (LDIAPKLDLR…STYNGMENET (140 aa)). The carbamoyl phosphate synthetic domain stretch occupies residues 543-945 (IPSKRRKIMV…AFAKAQLSAD (403 aa)). Positions 667–858 (AKFLKQSGLS…VAKIAAKTII (192 aa)) constitute an ATP-grasp 2 domain. ATP-binding residues include R703, K742, L744, E749, G774, I775, H776, S777, Q817, and E829. Residues Q817, E829, and N831 each coordinate Mg(2+). Residues Q817, E829, and N831 each coordinate Mn(2+). The 162-residue stretch at 940–1101 (AQLSADGIST…QDIFYAQQNT (162 aa)) folds into the MGS-like domain. An allosteric domain region spans residues 946–1105 (GISTKSLLVT…YAQQNTLLKK (160 aa)).

This sequence belongs to the CarB family. As to quaternary structure, composed of two chains; the small (or glutamine) chain promotes the hydrolysis of glutamine to ammonia, which is used by the large (or ammonia) chain to synthesize carbamoyl phosphate. Tetramer of heterodimers (alpha,beta)4. It depends on Mg(2+) as a cofactor. The cofactor is Mn(2+).

It carries out the reaction hydrogencarbonate + L-glutamine + 2 ATP + H2O = carbamoyl phosphate + L-glutamate + 2 ADP + phosphate + 2 H(+). The enzyme catalyses hydrogencarbonate + NH4(+) + 2 ATP = carbamoyl phosphate + 2 ADP + phosphate + 2 H(+). Its pathway is amino-acid biosynthesis; L-arginine biosynthesis; carbamoyl phosphate from bicarbonate: step 1/1. It participates in pyrimidine metabolism; UMP biosynthesis via de novo pathway; (S)-dihydroorotate from bicarbonate: step 1/3. Functionally, large subunit of the glutamine-dependent carbamoyl phosphate synthetase (CPSase). CPSase catalyzes the formation of carbamoyl phosphate from the ammonia moiety of glutamine, carbonate, and phosphate donated by ATP, constituting the first step of 2 biosynthetic pathways, one leading to arginine and/or urea and the other to pyrimidine nucleotides. The large subunit (synthetase) binds the substrates ammonia (free or transferred from glutamine from the small subunit), hydrogencarbonate and ATP and carries out an ATP-coupled ligase reaction, activating hydrogencarbonate by forming carboxy phosphate which reacts with ammonia to form carbamoyl phosphate. In Pseudothermotoga lettingae (strain ATCC BAA-301 / DSM 14385 / NBRC 107922 / TMO) (Thermotoga lettingae), this protein is Carbamoyl phosphate synthase large chain.